A 690-amino-acid polypeptide reads, in one-letter code: Elongation factor G (690 aa).

Residues 8-283 (DKYRNIGIMA…AVVDFLPSPL (276 aa)) form the tr-type G domain. GTP contacts are provided by residues 17-24 (AHIDAGKT), 81-85 (DTPGH), and 135-138 (NKLD).

Belongs to the TRAFAC class translation factor GTPase superfamily. Classic translation factor GTPase family. EF-G/EF-2 subfamily.

It localises to the cytoplasm. In terms of biological role, catalyzes the GTP-dependent ribosomal translocation step during translation elongation. During this step, the ribosome changes from the pre-translocational (PRE) to the post-translocational (POST) state as the newly formed A-site-bound peptidyl-tRNA and P-site-bound deacylated tRNA move to the P and E sites, respectively. Catalyzes the coordinated movement of the two tRNA molecules, the mRNA and conformational changes in the ribosome. This chain is Elongation factor G, found in Zymomonas mobilis subsp. mobilis (strain ATCC 31821 / ZM4 / CP4).